A 442-amino-acid polypeptide reads, in one-letter code: Chromosomal replication initiator protein DnaA (442 aa).

Positions 1-68 are domain I, interacts with DnaA modulators; it reads MDAWPRCLER…ELLAYFVGNG (68 aa). The tract at residues 68–104 is domain II; the sequence is GDVALAVGSRPRAPEPAPAPVAVPSAPQAAPIVPFAG. The tract at residues 105–322 is domain III, AAA+ region; sequence NLDSHYTFAN…GALNTLVARA (218 aa). Residues glycine 150, glycine 152, lysine 153, and threonine 154 each coordinate ATP. A domain IV, binds dsDNA region spans residues 323–442; sequence NFTGRSITVE…WEKLIRKLSE (120 aa).

This sequence belongs to the DnaA family. As to quaternary structure, oligomerizes as a right-handed, spiral filament on DNA at oriC.

It is found in the cytoplasm. Functionally, plays an essential role in the initiation and regulation of chromosomal replication. ATP-DnaA binds to the origin of replication (oriC) to initiate formation of the DNA replication initiation complex once per cell cycle. Binds the DnaA box (a 9 base pair repeat at the origin) and separates the double-stranded (ds)DNA. Forms a right-handed helical filament on oriC DNA; dsDNA binds to the exterior of the filament while single-stranded (ss)DNA is stabiized in the filament's interior. The ATP-DnaA-oriC complex binds and stabilizes one strand of the AT-rich DNA unwinding element (DUE), permitting loading of DNA polymerase. After initiation quickly degrades to an ADP-DnaA complex that is not apt for DNA replication. Binds acidic phospholipids. This chain is Chromosomal replication initiator protein DnaA, found in Xanthomonas axonopodis pv. citri (strain 306).